The following is a 390-amino-acid chain: GDSL esterase/lipase At1g28580 (390 aa).

A signal peptide spans 1–28 (MAYPGSPILMKLLVFIFLSTFVVTNVSS). Ser-44 functions as the Nucleophile in the catalytic mechanism. N-linked (GlcNAc...) asparagine glycans are attached at residues Asn-140 and Asn-322. Residues Asp-347 and His-350 contribute to the active site.

It belongs to the 'GDSL' lipolytic enzyme family.

Its subcellular location is the secreted. The protein is GDSL esterase/lipase At1g28580 of Arabidopsis thaliana (Mouse-ear cress).